The primary structure comprises 204 residues: Large ribosomal subunit protein uL4 (204 aa).

Residues 56–79 (VSGTTAKPYGQKRTGRARQGSLRS) form a disordered region.

Belongs to the universal ribosomal protein uL4 family. In terms of assembly, part of the 50S ribosomal subunit.

Its function is as follows. One of the primary rRNA binding proteins, this protein initially binds near the 5'-end of the 23S rRNA. It is important during the early stages of 50S assembly. It makes multiple contacts with different domains of the 23S rRNA in the assembled 50S subunit and ribosome. In terms of biological role, forms part of the polypeptide exit tunnel. The polypeptide is Large ribosomal subunit protein uL4 (Wolbachia pipientis subsp. Culex pipiens (strain wPip)).